Here is a 1033-residue protein sequence, read N- to C-terminus: NACHT, LRR and PYD domains-containing protein 11 (1033 aa).

The region spanning 1-91 (MAESDSTDFD…CRKIIGRRNR (91 aa)) is the Pyrin domain. The NACHT domain occupies 147-470 (LNVFLMGERA…AFLMAVPNYL (324 aa)). Residue 153–160 (GERASGKT) participates in ATP binding. 6 LRR repeats span residues 588–611 (CCHL…LIRP), 632–655 (MESL…ILSK), 745–768 (GGSL…ILCD), 802–827 (SPTL…TFPL), 859–882 (NEKL…LLCG), and 919–944 (LERL…LISP).

Belongs to the NLRP family.

In terms of biological role, involved in inflammation. This is NACHT, LRR and PYD domains-containing protein 11 (NLRP11) from Homo sapiens (Human).